A 148-amino-acid chain; its full sequence is Large ribosomal subunit protein uL15 (148 aa).

Positions 1–30 are enriched in basic residues; that stretch reads MPSRLRKTRKLRGHVSHGHGRIGKHRKHPG. A disordered region spans residues 1–37; that stretch reads MPSRLRKTRKLRGHVSHGHGRIGKHRKHPGGRGNAGG. (3S)-3-hydroxyhistidine is present on histidine 39. Residues lysine 47 and lysine 55 each carry the N6-acetyllysine modification. Serine 68 is modified (phosphoserine). Position 110 is an N6-acetyllysine (lysine 110).

The protein belongs to the universal ribosomal protein uL15 family. As to quaternary structure, component of the large ribosomal subunit. Hydroxylated on His-39 by MINA.

The protein resides in the cytoplasm. In terms of biological role, component of the large ribosomal subunit. The ribosome is a large ribonucleoprotein complex responsible for the synthesis of proteins in the cell. The protein is Large ribosomal subunit protein uL15 (Rpl27a) of Rattus norvegicus (Rat).